The following is a 515-amino-acid chain: Ribonuclease Y (515 aa).

The helical transmembrane segment at 6–26 (LTSFVIITLSLAVGLTGGYYG) threads the bilayer. One can recognise a KH domain in the interval 205-290 (TVSVVPLPND…EMVEKARKEI (86 aa)). Residues 331–424 (VLRHSVEVAH…VQAADAISAS (94 aa)) form the HD domain.

It belongs to the RNase Y family.

The protein resides in the cell membrane. Functionally, endoribonuclease that initiates mRNA decay. This is Ribonuclease Y from Syntrophomonas wolfei subsp. wolfei (strain DSM 2245B / Goettingen).